The primary structure comprises 295 residues: Release factor glutamine methyltransferase (295 aa).

S-adenosyl-L-methionine contacts are provided by residues 127–131, Asp-150, Phe-179, and Asn-195; that span reads GTGSG. 195 to 198 lines the substrate pocket; sequence NPPY.

Belongs to the protein N5-glutamine methyltransferase family. PrmC subfamily.

It carries out the reaction L-glutaminyl-[peptide chain release factor] + S-adenosyl-L-methionine = N(5)-methyl-L-glutaminyl-[peptide chain release factor] + S-adenosyl-L-homocysteine + H(+). Functionally, methylates the class 1 translation termination release factors RF1/PrfA and RF2/PrfB on the glutamine residue of the universally conserved GGQ motif. This is Release factor glutamine methyltransferase from Nitratidesulfovibrio vulgaris (strain ATCC 29579 / DSM 644 / CCUG 34227 / NCIMB 8303 / VKM B-1760 / Hildenborough) (Desulfovibrio vulgaris).